The chain runs to 414 residues: Procollagen C-endopeptidase enhancer 2 (414 aa).

A signal peptide spans 1 to 22 (MGGASACIPLCLLLATARMARP). 7 disulfide bridges follow: cysteine 32-cysteine 58, cysteine 85-cysteine 106, cysteine 153-cysteine 180, cysteine 207-cysteine 230, cysteine 296-cysteine 363, cysteine 300-cysteine 366, and cysteine 311-cysteine 414. CUB domains follow at residues 32–143 (CGGI…YSAA) and 153–267 (CGGR…YKFR). An NTR domain is found at 296-414 (CQQKCRRMGT…PMNALKNKQC (119 aa)). N-linked (GlcNAc...) asparagine glycosylation is present at asparagine 354.

As to quaternary structure, interacts with heparin with high affinity, and type I or II collagen. In terms of processing, O-glycosylated; contains sialic acid.

Its subcellular location is the secreted. Functionally, binds to the C-terminal propeptide of types I and II procollagens and may enhance the cleavage of that propeptide by BMP1. This is Procollagen C-endopeptidase enhancer 2 (Pcolce2) from Mus musculus (Mouse).